Consider the following 388-residue polypeptide: Formate-dependent phosphoribosylglycinamide formyltransferase (388 aa).

Residues 20–21 (EL) and glutamate 80 each bind N(1)-(5-phospho-beta-D-ribosyl)glycinamide. ATP contacts are provided by residues arginine 112, lysine 153, 158–163 (SSGKGQ), 193–196 (EEFI), and glutamate 201. The 190-residue stretch at 117 to 306 (RLAFEKLGLR…EFEIHARAIL (190 aa)) folds into the ATP-grasp domain. Mg(2+) contacts are provided by glutamate 265 and glutamate 277. N(1)-(5-phospho-beta-D-ribosyl)glycinamide-binding positions include aspartate 284, lysine 352, and 359 to 360 (RR).

Belongs to the PurK/PurT family. As to quaternary structure, homodimer.

The catalysed reaction is N(1)-(5-phospho-beta-D-ribosyl)glycinamide + formate + ATP = N(2)-formyl-N(1)-(5-phospho-beta-D-ribosyl)glycinamide + ADP + phosphate + H(+). It functions in the pathway purine metabolism; IMP biosynthesis via de novo pathway; N(2)-formyl-N(1)-(5-phospho-D-ribosyl)glycinamide from N(1)-(5-phospho-D-ribosyl)glycinamide (formate route): step 1/1. In terms of biological role, involved in the de novo purine biosynthesis. Catalyzes the transfer of formate to 5-phospho-ribosyl-glycinamide (GAR), producing 5-phospho-ribosyl-N-formylglycinamide (FGAR). Formate is provided by PurU via hydrolysis of 10-formyl-tetrahydrofolate. This Methanococcus maripaludis (strain C7 / ATCC BAA-1331) protein is Formate-dependent phosphoribosylglycinamide formyltransferase.